Here is a 263-residue protein sequence, read N- to C-terminus: ATP synthase subunit a (263 aa).

Positions 1 to 14 are cleaved as a propeptide — removed in mature form; sequence MYLNNNNNMKYYIN. The next 6 membrane-spanning stretches (helical) occupy residues 35–57, 95–117, 129–151, 156–178, 191–213, and 228–250; these read FSFI…ILTM, VWGY…NLIS, VVFV…FYTH, FGLF…IELL, LSAN…FNLM, and IAIL…VWCI.

The protein belongs to the ATPase A chain family. In terms of assembly, F-type ATPases have 2 components, CF(1) - the catalytic core - and CF(0) - the membrane proton channel. In yeast, the dimeric form of ATP synthase consists of 18 polypeptides: alpha, beta, gamma, delta, epsilon, 4 (B), 5 (OSCP), 6 (A), 8, 9 (C), d, E (Tim11), f, g, h, i, j and k.

Its subcellular location is the mitochondrion inner membrane. Functionally, mitochondrial membrane ATP synthase (F(1)F(0) ATP synthase or Complex V) produces ATP from ADP in the presence of a proton gradient across the membrane which is generated by electron transport complexes of the respiratory chain. F-type ATPases consist of two structural domains, F(1) - containing the extramembraneous catalytic core and F(0) - containing the membrane proton channel, linked together by a central stalk and a peripheral stalk. During catalysis, ATP synthesis in the catalytic domain of F(1) is coupled via a rotary mechanism of the central stalk subunits to proton translocation. Key component of the proton channel; it may play a direct role in the translocation of protons across the membrane. This is ATP synthase subunit a (ATP6) from Eremothecium gossypii (strain ATCC 10895 / CBS 109.51 / FGSC 9923 / NRRL Y-1056) (Yeast).